A 398-amino-acid chain; its full sequence is Acetate kinase (398 aa).

Asn8 serves as a coordination point for Mg(2+). Lys15 contacts ATP. Residue Arg92 participates in substrate binding. Asp149 acts as the Proton donor/acceptor in catalysis. Residues 209-213 (HLGNG), 283-285 (DFR), and 331-335 (GVGEN) each bind ATP. Residue Glu385 coordinates Mg(2+).

This sequence belongs to the acetokinase family. Homodimer. It depends on Mg(2+) as a cofactor. The cofactor is Mn(2+).

It localises to the cytoplasm. It catalyses the reaction acetate + ATP = acetyl phosphate + ADP. The protein operates within metabolic intermediate biosynthesis; acetyl-CoA biosynthesis; acetyl-CoA from acetate: step 1/2. Functionally, catalyzes the formation of acetyl phosphate from acetate and ATP. Can also catalyze the reverse reaction. The sequence is that of Acetate kinase from Corynebacterium efficiens (strain DSM 44549 / YS-314 / AJ 12310 / JCM 11189 / NBRC 100395).